Reading from the N-terminus, the 209-residue chain is Protein ASG7 (209 aa).

The Lumenal segment spans residues 1–49; that stretch reads MTTLASSIEHKTKHLAAPFENDENPWMKKYCCQCKSCKMSVPVQPWLPR. The chain crosses the membrane as a helical span at residues 50 to 70; sequence FFVFGILCPVFWLVNLLAWWF. At 71–184 the chain is on the cytoplasmic side; it reads LQYWQPHELE…LLRKTFRDWN (114 aa). Phosphoserine is present on residues serine 121, serine 123, and serine 125. At threonine 153 the chain carries Phosphothreonine. A helical membrane pass occupies residues 185-205; that stretch reads LRSLLGLLIDSILIIFVVLLC. Residues 206 to 209 are Lumenal-facing; the sequence is KKSR.

It is found in the endomembrane system. Functionally, required for receptor inhibition of inappropriately expressed a-factor receptor (STE3) in MAT a cells. Inhibits signaling by relocalizing the G protein beta-gamma (STE4-STE18) subunit to intracellular membranes. May also be a mechanism for the down-regulation of the mating pheromone response after the zygotic fusion event, promoting the transition of the new diploid cell to vegetative growth. The polypeptide is Protein ASG7 (ASG7) (Saccharomyces cerevisiae (strain ATCC 204508 / S288c) (Baker's yeast)).